The primary structure comprises 703 residues: Protein teflon (703 aa).

The segment at 32–55 (MFCHFCKDIFTHLPEFMRHLQWSH) adopts a C2H2-type 1 zinc-finger fold. 3 disordered regions span residues 78-111 (TSED…PGSS), 138-161 (SHEQ…ARKP), and 339-434 (SQQP…SKLE). Polar residues-rich tracts occupy residues 84 to 94 (QSQANSCSSGD) and 138 to 147 (SHEQSYSKTP). The span at 148 to 161 (PDSRTEGFRCARKP) shows a compositional bias: basic and acidic residues. Polar residues-rich tracts occupy residues 339–352 (SQQP…NNAV) and 364–373 (SLTVISSSPI). 2 C2H2-type zinc fingers span residues 649-672 (YFCE…QSVH) and 677-700 (FTCS…KTVH).

Belongs to the Teflon family.

The protein resides in the nucleus. It localises to the chromosome. Functionally, specifically required in males for proper segregation of autosomal bivalents at meiosis I. Expression is required in the male germ line prior to spermatocyte stage S4. May have a role as a bridging molecule maintaining adhesion to hold autosome bivalents together via heterochromatic connections. This chain is Protein teflon, found in Drosophila pseudoobscura pseudoobscura (Fruit fly).